A 500-amino-acid polypeptide reads, in one-letter code: Glutamate--tRNA ligase (500 aa).

The short motif at 12–22 is the 'HIGH' region element; the sequence is PSPTGHLHIGN. The 'KMSKS' region signature appears at 259–263; sequence KLSKR. Residue Lys-262 participates in ATP binding.

The protein belongs to the class-I aminoacyl-tRNA synthetase family. Glutamate--tRNA ligase type 1 subfamily. Monomer.

Its subcellular location is the cytoplasm. The catalysed reaction is tRNA(Glu) + L-glutamate + ATP = L-glutamyl-tRNA(Glu) + AMP + diphosphate. In terms of biological role, catalyzes the attachment of glutamate to tRNA(Glu) in a two-step reaction: glutamate is first activated by ATP to form Glu-AMP and then transferred to the acceptor end of tRNA(Glu). This chain is Glutamate--tRNA ligase, found in Lactobacillus delbrueckii subsp. bulgaricus.